Consider the following 419-residue polypeptide: Maltoporin 2 (419 aa).

Positions 1 to 23 (MKTSLRTLSVALAAALVSPSVLA) are cleaved as a signal peptide.

This sequence belongs to the porin LamB (TC 1.B.3) family. As to quaternary structure, homotrimer formed of three 18-stranded antiparallel beta-barrels, containing three independent channels.

The protein localises to the cell outer membrane. It catalyses the reaction beta-maltose(in) = beta-maltose(out). In terms of biological role, involved in the transport of maltose and maltodextrins. This chain is Maltoporin 2, found in Yersinia pestis bv. Antiqua (strain Antiqua).